We begin with the raw amino-acid sequence, 360 residues long: Venom serine protease Bi-VSP (360 aa).

An N-terminal signal peptide occupies residues 1 to 26; it reads MTGSKMLFACLALIAFLHPLVHVASA. A propeptide spanning residues 27-113 is cleaved from the precursor; the sequence is QECTTPNNKA…CGFSNVSHTR (87 aa). The region spanning 28–79 is the Clip domain; sequence ECTTPNNKAGKCLGIRVCKPLLEMLQTQGHAAADFLRQSVCKYENNNPIVCC. 7 disulfides stabilise this stretch: Cys29–Cys78, Cys39–Cys68, Cys45–Cys79, Cys104–Cys230, Cys147–Cys163, Cys278–Cys296, and Cys307–Cys335. Asn108 is a glycosylation site (N-linked (GlcNAc...) asparagine). One can recognise a Peptidase S1 domain in the interval 114–360; it reads VVGGKPAVLG…LDDFILPAMQ (247 aa). The active-site Charge relay system is His162. Ca(2+) is bound by residues Asp176, Asn178, Arg181, and Asp184. Asp210 (charge relay system) is an active-site residue. Catalysis depends on Ser311, which acts as the Charge relay system.

The protein belongs to the peptidase S1 family. CLIP subfamily. As to expression, expressed by the venom gland.

The protein localises to the secreted. In terms of biological role, multifunctional venom serine protease. In insects, it acts as an arthropod prophenoloxidase-activating factor, thereby triggering the phenoloxidase cascade. When injected into larvae, it induces a lethal melanization response in target insects by modulating the innate immune response. In mammals, it converts fibrinogen into fibrin, activates prothrombin, and also degrades fibrin. In mammal, it may act in a cooperative manner with the serine protease inhibitor Bi-KTI (AC G3LH89) to promote the spread of bee venom under anti-bleeding conditions. The polypeptide is Venom serine protease Bi-VSP (Bombus ignitus (Bumblebee)).